The chain runs to 1438 residues: Gag-Pol polyprotein (1438 aa).

A lipid anchor (N-myristoyl glycine; by host) is attached at Gly2. Positions 16 to 22 (WEKIYLR) match the Nuclear export signal motif. A Nuclear localization signal motif is present at residues 26-32 (KKKYMMK). 2 CCHC-type zinc fingers span residues 385–402 (VKCF…NCKA) and 406–423 (KGCW…NCTN). The disordered stretch occupies residues 439–481 (GKAREFPSEETRTNSSTNRELRVQGGGTCPEGGSEERGDREQA). Positions 440–450 (KAREFPSEETR) are enriched in basic and acidic residues. The region spanning 507-576 (KEALLDTGAD…TPVNIIGRNI (70 aa)) is the Peptidase A2 domain. Catalysis depends on Asp512, which acts as the For protease activity; shared with dimeric partner. The Reverse transcriptase domain occupies 630 to 820 (EGKISRVGPE…PPFLWMGYEL (191 aa)). Residues Asp696, Asp771, and Asp772 each contribute to the Mg(2+) site. Residues 813-821 (FLWMGYELH) form an RT 'primer grip' region. The Tryptophan repeat motif motif lies at 984-1000 (WEAWWTDYWQATWIPEW). The 124-residue stretch at 1020–1143 (IPGAETFYVD…IDKLVSSGIR (124 aa)) folds into the RNase H type-1 domain. Mg(2+) is bound by residues Asp1029, Glu1064, Asp1084, and Asp1135. Residues 1149–1190 (DGIDKAQEEHEKYHNNWRAMASDFNLPPIVAKEIVANCDKCQ) form an Integrase-type zinc finger. The Zn(2+) site is built by His1158, His1162, Cys1186, and Cys1189. Residues 1200–1350 (VDCSPGIWQL…SAGERIIDIL (151 aa)) form the Integrase catalytic domain. Mg(2+) contacts are provided by Asp1210 and Asp1262. Residues 1369-1416 (FRVYYRDSRDPIWKGPAKLLWKGEGAVVLQDQEEIKVVPRRKAKIIRD) constitute a DNA-binding region (integrase-type).

Homotrimer. Interacts with gp41 (via C-terminus). In terms of assembly, homodimer. The active site consists of two apposed aspartic acid residues. As to quaternary structure, heterodimer of p66 RT and p51 RT (RT p66/p51). Heterodimerization of RT is essential for DNA polymerase activity. Despite the sequence identities, p66 RT and p51 RT have distinct folding. Homotetramer; may further associate as a homohexadecamer. It depends on Mg(2+) as a cofactor. Post-translationally, specific enzymatic cleavages by the viral protease yield mature proteins. The protease is released by autocatalytic cleavage. The polyprotein is cleaved during and after budding, this process is termed maturation. Proteolytic cleavage of p66 RT removes the RNase H domain to yield the p51 RT subunit. Capsid protein p24 is phosphorylated.

The protein resides in the virion. It localises to the host nucleus. It is found in the host cytoplasm. Its subcellular location is the host cell membrane. It catalyses the reaction Specific for a P1 residue that is hydrophobic, and P1' variable, but often Pro.. It carries out the reaction Endohydrolysis of RNA in RNA/DNA hybrids. Three different cleavage modes: 1. sequence-specific internal cleavage of RNA. Human immunodeficiency virus type 1 and Moloney murine leukemia virus enzymes prefer to cleave the RNA strand one nucleotide away from the RNA-DNA junction. 2. RNA 5'-end directed cleavage 13-19 nucleotides from the RNA end. 3. DNA 3'-end directed cleavage 15-20 nucleotides away from the primer terminus.. The enzyme catalyses 3'-end directed exonucleolytic cleavage of viral RNA-DNA hybrid.. The catalysed reaction is DNA(n) + a 2'-deoxyribonucleoside 5'-triphosphate = DNA(n+1) + diphosphate. Its activity is regulated as follows. The viral protease is inhibited by many synthetic protease inhibitors (PIs), such as amprenavir, atazanavir, indinavir, loprinavir, nelfinavir, ritonavir and saquinavir. RT can be inhibited either by nucleoside RT inhibitors (NRTIs) or by non nucleoside RT inhibitors (NNRTIs). NRTIs act as chain terminators, whereas NNRTIs inhibit DNA polymerization by binding a small hydrophobic pocket near the RT active site and inducing an allosteric change in this region. Classical NRTIs are abacavir, adefovir (PMEA), didanosine (ddI), lamivudine (3TC), stavudine (d4T), tenofovir (PMPA), zalcitabine (ddC), and zidovudine (AZT). Classical NNRTIs are atevirdine (BHAP U-87201E), delavirdine, efavirenz (DMP-266), emivirine (I-EBU), and nevirapine (BI-RG-587). The tritherapies used as a basic effective treatment of AIDS associate two NRTIs and one NNRTI. Use of protease inhibitors in tritherapy regimens permit more ambitious therapeutic strategies. In terms of biological role, gag-Pol polyprotein and Gag polyprotein may regulate their own translation, by the binding genomic RNA in the 5'-UTR. At low concentration, Gag-Pol and Gag would promote translation, whereas at high concentration, the polyproteins encapsidate genomic RNA and then shut off translation. Matrix protein p17 has two main functions: in infected cell, it targets Gag and Gag-pol polyproteins to the plasma membrane via a multipartite membrane-binding signal, that includes its myristointegration complex. The myristoylation signal and the NLS exert conflicting influences its subcellular localization. The key regulation of these motifs might be phosphorylation of a portion of MA molecules on the C-terminal tyrosine at the time of virus maturation, by virion-associated cellular tyrosine kinase. Implicated in the release from host cell mediated by Vpu. Its function is as follows. Capsid protein p24 forms the conical core that encapsulates the genomic RNA-nucleocapsid complex in the virion. The core is constituted by capsid protein hexamer subunits. The core is disassembled soon after virion entry. Interaction with host PPIA/CYPA protects the virus from restriction by host TRIM5-alpha and from an unknown antiviral activity in host cells. This capsid restriction by TRIM5 is one of the factors which restricts SIV to the simian species. Functionally, nucleocapsid protein p7 encapsulates and protects viral dimeric unspliced (genomic) RNA. Binds these RNAs through its zinc fingers. Facilitates rearangement of nucleic acid secondary structure during retrotranscription of genomic RNA. This capability is referred to as nucleic acid chaperone activity. In terms of biological role, the aspartyl protease mediates proteolytic cleavages of Gag and Gag-Pol polyproteins during or shortly after the release of the virion from the plasma membrane. Cleavages take place as an ordered, step-wise cascade to yield mature proteins. This process is called maturation. Displays maximal activity during the budding process just prior to particle release from the cell. Also cleaves Nef and Vif, probably concomitantly with viral structural proteins on maturation of virus particles. Hydrolyzes host EIF4GI and PABP1 in order to shut off the capped cellular mRNA translation. The resulting inhibition of cellular protein synthesis serves to ensure maximal viral gene expression and to evade host immune response. Reverse transcriptase/ribonuclease H (RT) is a multifunctional enzyme that converts the viral dimeric RNA genome into dsDNA in the cytoplasm, shortly after virus entry into the cell. This enzyme displays a DNA polymerase activity that can copy either DNA or RNA templates, and a ribonuclease H (RNase H) activity that cleaves the RNA strand of RNA-DNA heteroduplexes in a partially processive 3' to 5' endonucleasic mode. Conversion of viral genomic RNA into dsDNA requires many steps. A tRNA binds to the primer-binding site (PBS) situated at the 5'-end of the viral RNA. RT uses the 3' end of the tRNA primer to perform a short round of RNA-dependent minus-strand DNA synthesis. The reading proceeds through the U5 region and ends after the repeated (R) region which is present at both ends of viral RNA. The portion of the RNA-DNA heteroduplex is digested by the RNase H, resulting in a ssDNA product attached to the tRNA primer. This ssDNA/tRNA hybridizes with the identical R region situated at the 3' end of viral RNA. This template exchange, known as minus-strand DNA strong stop transfer, can be either intra- or intermolecular. RT uses the 3' end of this newly synthesized short ssDNA to perform the RNA-dependent minus-strand DNA synthesis of the whole template. RNase H digests the RNA template except for two polypurine tracts (PPTs) situated at the 5'-end and near the center of the genome. It is not clear if both polymerase and RNase H activities are simultaneous. RNase H can probably proceed both in a polymerase-dependent (RNA cut into small fragments by the same RT performing DNA synthesis) and a polymerase-independent mode (cleavage of remaining RNA fragments by free RTs). Secondly, RT performs DNA-directed plus-strand DNA synthesis using the PPTs that have not been removed by RNase H as primers. PPTs and tRNA primers are then removed by RNase H. The 3' and 5' ssDNA PBS regions hybridize to form a circular dsDNA intermediate. Strand displacement synthesis by RT to the PBS and PPT ends produces a blunt ended, linear dsDNA copy of the viral genome that includes long terminal repeats (LTRs) at both ends. Its function is as follows. Integrase catalyzes viral DNA integration into the host chromosome, by performing a series of DNA cutting and joining reactions. This enzyme activity takes place after virion entry into a cell and reverse transcription of the RNA genome in dsDNA. The first step in the integration process is 3' processing. This step requires a complex comprising the viral genome, matrix protein, Vpr and integrase. This complex is called the pre-integration complex (PIC). The integrase protein removes 2 nucleotides from each 3' end of the viral DNA, leaving recessed CA OH's at the 3' ends. In the second step, the PIC enters cell nucleus. This process is mediated through integrase and Vpr proteins, and allows the virus to infect a non dividing cell. This ability to enter the nucleus is specific of lentiviruses, other retroviruses cannot and rely on cell division to access cell chromosomes. In the third step, termed strand transfer, the integrase protein joins the previously processed 3' ends to the 5' ends of strands of target cellular DNA at the site of integration. The 5'-ends are produced by integrase-catalyzed staggered cuts, 5 bp apart. A Y-shaped, gapped, recombination intermediate results, with the 5'-ends of the viral DNA strands and the 3' ends of target DNA strands remaining unjoined, flanking a gap of 5 bp. The last step is viral DNA integration into host chromosome. This involves host DNA repair synthesis in which the 5 bp gaps between the unjoined strands are filled in and then ligated. Since this process occurs at both cuts flanking the SIV genome, a 5 bp duplication of host DNA is produced at the ends of SIV integration. Alternatively, Integrase may catalyze the excision of viral DNA just after strand transfer, this is termed disintegration. In Pan troglodytes (Chimpanzee), this protein is Gag-Pol polyprotein (gag-pol).